Consider the following 1388-residue polypeptide: DNA-directed RNA polymerase subunit beta (1388 aa).

Belongs to the RNA polymerase beta chain family. As to quaternary structure, the RNAP catalytic core consists of 2 alpha, 1 beta, 1 beta' and 1 omega subunit. When a sigma factor is associated with the core the holoenzyme is formed, which can initiate transcription.

It catalyses the reaction RNA(n) + a ribonucleoside 5'-triphosphate = RNA(n+1) + diphosphate. Functionally, DNA-dependent RNA polymerase catalyzes the transcription of DNA into RNA using the four ribonucleoside triphosphates as substrates. The polypeptide is DNA-directed RNA polymerase subunit beta (Xylella fastidiosa (strain 9a5c)).